A 25-amino-acid polypeptide reads, in one-letter code: Histone H1.1 (25 aa).

An H15 domain is found at 1–25 (MVSEAIAALKEREGSSEFAIGKKKE). A disordered region spans residues 1–25 (MVSEAIAALKEREGSSEFAIGKKKE). Residues 9-25 (LKEREGSSEFAIGKKKE) are compositionally biased toward basic and acidic residues.

The protein localises to the nucleus. It is found in the chromosome. Histones H1 are necessary for the condensation of nucleosome chains into higher-order structures. This chain is Histone H1.1, found in Triticum aestivum (Wheat).